Here is a 292-residue protein sequence, read N- to C-terminus: Ferric aerobactin-binding protein VatD (292 aa).

Positions 1-12 are cleaved as a signal peptide; the sequence is MLSAALAFNSYA. A Fe/B12 periplasmic-binding domain is found at 30-292; it reads KVVALDWVLT…HITGRLTQPQ (263 aa). Desferrioxamine B is bound by residues Trp61, Arg77, Tyr118, Arg185, Trp213, Phe215, Trp269, and Phe271.

It belongs to the bacterial solute-binding protein 8 family. As to quaternary structure, the complex is composed of two ATP-binding proteins (VatC), two transmembrane proteins (VatB) and a solute-binding protein (VatD).

Its subcellular location is the periplasm. In terms of biological role, part of the ABC transporter complex VatCDB involved in the import of iron(3+)-complexed aerobactin, a citrate-hydroxamate siderophore produced by other bacteria. Binds the iron(3+)-aerobactin complex and transfers it to the membrane-bound permease. Functions in the import of iron(3+)-complexed vulnibactin, a catecholate siderophore synthesized by V.vulnificus, in the absence of FatB. The chain is Ferric aerobactin-binding protein VatD from Vibrio vulnificus.